We begin with the raw amino-acid sequence, 105 residues long: Large ribosomal subunit protein eL36 (105 aa).

Belongs to the eukaryotic ribosomal protein eL36 family. In terms of assembly, component of the large ribosomal subunit.

It is found in the cytoplasm. It localises to the cytosol. Functionally, component of the large ribosomal subunit. The ribosome is a large ribonucleoprotein complex responsible for the synthesis of proteins in the cell. The sequence is that of Large ribosomal subunit protein eL36 (RPL36) from Hydrophis hardwickii (Hardwick's spine-bellied seasnake).